Consider the following 860-residue polypeptide: Leucine--tRNA ligase (860 aa).

The short motif at 42 to 52 is the 'HIGH' region element; sequence PYPSGRLHMGH. Residues 619–623 carry the 'KMSKS' region motif; that stretch reads KMSKS. Lys622 contacts ATP.

The protein belongs to the class-I aminoacyl-tRNA synthetase family.

Its subcellular location is the cytoplasm. The enzyme catalyses tRNA(Leu) + L-leucine + ATP = L-leucyl-tRNA(Leu) + AMP + diphosphate. The protein is Leucine--tRNA ligase of Pasteurella multocida (strain Pm70).